A 151-amino-acid chain; its full sequence is Large ribosomal subunit protein uL13 (151 aa).

Belongs to the universal ribosomal protein uL13 family. In terms of assembly, part of the 50S ribosomal subunit.

Functionally, this protein is one of the early assembly proteins of the 50S ribosomal subunit, although it is not seen to bind rRNA by itself. It is important during the early stages of 50S assembly. This Petrotoga mobilis (strain DSM 10674 / SJ95) protein is Large ribosomal subunit protein uL13.